A 502-amino-acid chain; its full sequence is MTKSDETTATSLNAKTLKSFESTLPIPTYPREGVKQGIVHLGVGAFHRSHLAVFMHRLMQEHHLKDWSICGVGLMKADALMRDAMKAQDCLYTLVERGIKDTNAYIVGSITAYMYAPDDPRAVIEKMANPDTHIVSLTVTENGYYHSEATNSLMTDAPEIINDLNHPEKPDTLYGYLYEALLLRYKRGLTPFTIMSCDNMPQNGVTVKTMLVAFAKLKKDEKFAAWIEDKVTSPNSMVDRVTPRCTDKERKYVADTWGIKDQCPVVAEPFIQWVLEDNFSDGRPPWELVGVQVVKDVDSYELMKLRLLNGGHSAMGYLGYLAGYTYIHEVVNDPTINKYIRVLMREEVIPLLPKVPGVDFEEYTASVLERFSNPAIQDTVARICLMGSGKMPKYVLPSIYEQLRKPDGKYKLLAVCVAGWFRYLTGVDMNGKPFEIEDPMAPTLKAAAVKGGKDPHELLNIEVLFSPEIRDNKEFVAQLTHSLETVYDKGPIAAIKEILDQV.

Belongs to the mannitol dehydrogenase family.

It catalyses the reaction D-mannitol + NAD(+) = D-fructose + NADH + H(+). Catalyzes the NAD(H)-dependent interconversion of D-fructose and D-mannitol in the mannitol metabolic pathway. The chain is Mannitol dehydrogenase 2 from Saccharomyces cerevisiae (strain ATCC 204508 / S288c) (Baker's yeast).